The primary structure comprises 290 residues: 4-hydroxybenzoate octaprenyltransferase (290 aa).

A run of 8 helical transmembrane segments spans residues 23–43 (IGAL…TPGV), 46–66 (LWIL…GCVV), 99–119 (LFVV…TMTI), 141–161 (LPQV…FAAV), 163–183 (ESVP…AVAY), 213–233 (LIIG…GELN), 234–254 (GLGW…VYQQ), and 268–288 (AFMN…MSYW).

This sequence belongs to the UbiA prenyltransferase family. The cofactor is Mg(2+).

The protein localises to the cell inner membrane. It carries out the reaction all-trans-octaprenyl diphosphate + 4-hydroxybenzoate = 4-hydroxy-3-(all-trans-octaprenyl)benzoate + diphosphate. The protein operates within cofactor biosynthesis; ubiquinone biosynthesis. Its function is as follows. Catalyzes the prenylation of para-hydroxybenzoate (PHB) with an all-trans polyprenyl group. Mediates the second step in the final reaction sequence of ubiquinone-8 (UQ-8) biosynthesis, which is the condensation of the polyisoprenoid side chain with PHB, generating the first membrane-bound Q intermediate 3-octaprenyl-4-hydroxybenzoate. The chain is 4-hydroxybenzoate octaprenyltransferase from Escherichia coli (strain SE11).